A 215-amino-acid polypeptide reads, in one-letter code: Cytochrome b6 (215 aa).

Residues 32-52 (IFHCLGGITLTCFLVQVATGF) form a helical membrane-spanning segment. Residue cysteine 35 participates in heme c binding. Histidine 86 and histidine 100 together coordinate heme b. 3 helical membrane passes run 90–110 (ASMMVLMMILHVFRVYLTGGF), 116–136 (LTWVTGVVLAVLTASFGVTGY), and 186–206 (LHTFVLPLLTAVFMLMHFPMI). Heme b-binding residues include histidine 187 and histidine 202.

This sequence belongs to the cytochrome b family. PetB subfamily. In terms of assembly, the 4 large subunits of the cytochrome b6-f complex are cytochrome b6, subunit IV (17 kDa polypeptide, PetD), cytochrome f and the Rieske protein, while the 4 small subunits are PetG, PetL, PetM and PetN. The complex functions as a dimer. It depends on heme b as a cofactor. The cofactor is heme c.

It is found in the plastid. It localises to the chloroplast thylakoid membrane. Its function is as follows. Component of the cytochrome b6-f complex, which mediates electron transfer between photosystem II (PSII) and photosystem I (PSI), cyclic electron flow around PSI, and state transitions. The chain is Cytochrome b6 from Calycanthus floridus var. glaucus (Eastern sweetshrub).